The sequence spans 444 residues: Argininosuccinate synthase (444 aa).

ATP contacts are provided by residues 17–25 and Ala-43; that span reads AFSGGLDTS. Residue Tyr-99 participates in L-citrulline binding. The ATP site is built by Gly-129 and Thr-131. Positions 131, 135, and 136 each coordinate L-aspartate. Asn-135 contacts L-citrulline. Residue Asp-136 coordinates ATP. 2 residues coordinate L-citrulline: Arg-139 and Ser-192. Asp-194 lines the ATP pocket. 3 residues coordinate L-citrulline: Thr-201, Glu-203, and Glu-280.

This sequence belongs to the argininosuccinate synthase family. Type 2 subfamily. As to quaternary structure, homotetramer.

The protein localises to the cytoplasm. It catalyses the reaction L-citrulline + L-aspartate + ATP = 2-(N(omega)-L-arginino)succinate + AMP + diphosphate + H(+). The protein operates within amino-acid biosynthesis; L-arginine biosynthesis; L-arginine from L-ornithine and carbamoyl phosphate: step 2/3. The sequence is that of Argininosuccinate synthase from Burkholderia lata (strain ATCC 17760 / DSM 23089 / LMG 22485 / NCIMB 9086 / R18194 / 383).